The primary structure comprises 130 residues: Large ribosomal subunit protein eL34 (130 aa).

The segment at 111–130 (KPVSKPPKIQKTAKAASKSK) is disordered.

This sequence belongs to the eukaryotic ribosomal protein eL34 family.

The chain is Large ribosomal subunit protein eL34 (RpL34) from Aedes albopictus (Asian tiger mosquito).